The sequence spans 787 residues: GPI ethanolamine phosphate transferase 2 (787 aa).

Asn-33, Asn-185, and Asn-397 each carry an N-linked (GlcNAc...) asparagine glycan. The next 3 membrane-spanning stretches (helical) occupy residues 400-420 (FLTYGTTLMIIGTLIVTVWNF), 426-446 (YIEHVGTSVLLGISMFASSFI), and 455-475 (WITISVLLLMQISNGKKLVVL). An N-linked (GlcNAc...) asparagine glycan is attached at Asn-485. 2 helical membrane-spanning segments follow: residues 504-524 (HTSVLWWLNVVTFLSVGFPFL) and 536-556 (LLSVSFLALSSITYKICFAIV). Asn-581 carries an N-linked (GlcNAc...) asparagine glycan. The chain crosses the membrane as a helical span at residues 591-611 (LVPIARIFFQICGVSIIILLF). Asn-617 is a glycosylation site (N-linked (GlcNAc...) asparagine). The chain crosses the membrane as a helical span at residues 629–651 (VIKFVLLLQTSSANIPLFLIFEI). The N-linked (GlcNAc...) asparagine glycan is linked to Asn-669. A run of 4 helical transmembrane segments spans residues 671-693 (TFFQFGGTNSIATVNLTNAYNGV), 699-719 (IYVVGVLMFLSNYAPSIYWAL), 740-760 (GTCLMIACIALRYHLFIWSVF), and 767-787 (YAAWSLYNVVMDFAITLLGVL).

This sequence belongs to the PIGG/PIGN/PIGO family. PIGG subfamily.

The protein resides in the endoplasmic reticulum membrane. Its pathway is glycolipid biosynthesis; glycosylphosphatidylinositol-anchor biosynthesis. Its function is as follows. Ethanolamine phosphate transferase involved in glycosylphosphatidylinositol-anchor biosynthesis. Transfers ethanolamine phosphate to the GPI second mannose. This Kluyveromyces lactis (strain ATCC 8585 / CBS 2359 / DSM 70799 / NBRC 1267 / NRRL Y-1140 / WM37) (Yeast) protein is GPI ethanolamine phosphate transferase 2 (LAS21).